The following is a 350-amino-acid chain: MARIQTVLGSITPNLLGRTLTHEHVAMDFEHFYKPPPADFQSELEQKISMATLGYVRLYPYSSKENVRFYDEEALEASRKDVLLYKKHGGGAIVENSSYGLKRNLEFIVDLAKTTGVHFIAGTGHYIHATQDASHKNLTVEQMTDLYSKDILTGIEVNGRMVKSGFIGEVASVYPVQEFERHSLLAAGEIQEVLGCGVSLHPHRVSKAPFEILRLYLEAGGRANKCVMSHLDRTLFDMDELLEFAKMGCYLQYDLFGTECSYYQLNSAVDMISDGQRIDNIIKLINEGLVDRLLMSHDIHTKHRLTSYGGHGYHHIHMNILPRMFQRGVTLDQVEQMTVTNPANWLSFSA.

Residues His-22, His-24, Glu-169, His-201, His-230, and Asp-298 each coordinate a divalent metal cation.

Belongs to the metallo-dependent hydrolases superfamily. Phosphotriesterase family. A divalent metal cation is required as a cofactor.

The protein is Phosphotriesterase-related protein of Drosophila grimshawi (Hawaiian fruit fly).